The following is a 143-amino-acid chain: uncharacterized protein (143 aa).

Residue cysteine 12 is part of the active site.

Belongs to the ArsC family.

This is an uncharacterized protein from Rhodospirillum rubrum.